Consider the following 1337-residue polypeptide: MATPRAPRWPPPSLLLLLLLPLLLLPPAAPGARGSLPSPAHRTLLPVAGPLSPPGAGHTAPGPGVATRRGRSGRVPRGVSAAAARNRWLESNNPEPHIGCSPSYQSQEDHSGSRKGVTAQNARMSHSSSEGPENPPLLPETSAEWSNMASSHRADIAGLRRGPSPEITTAPTAHSSLLSLESLPESPSSSRSQRRITPSQTESGTSLGFLERTRELPEEGTVHTQVAGTWVSRQASHPALEPGEPTVLSQKRNSSGQEHSGPPFSWSQSHPPPSDHPSSSGSIKNGNNFTALQNPSVTQTKSMLITDTYTNGVPRTLRSLPVGVDPADETEGFPEHSRLGITSMSVRSSPSVKDSRTNSGLTEHLGDGEGTELSTENGYGLPSIHWQSDAPSFGGRQLASSSEAGDGRAMPLTEAVFRSDPSIGGGESTGRWILTKKKTSTDAAESSALHPEAGGAGGLTQSSHAAQQPRGGGEDSGMGGRSYAESSSSSSSTSSSESLDSSAPLREHSLTGLSYTREHGSDAGQRTSSDHTDHGYVPSTFTKGERTLLSITDNTSYSEASESSTSSVKISDSPSQAQPKQSSMSSDDDEPAQSSTESPVLHTSNLPTYTSTVNMPNTLVLDTGTKPVEDPSDSRVPSTQPSPSQPQPFSSALPSTRSPGSTSETTTSSPSPSPISLLVSTLAPYSVSQTTFPHPSSTLVPHRPREPRVTSVQMSTAISAIALIPSNQTANPKNQSTPQQEKPITEAKSPSLVSPPTDSTKAVTVSLPPGAPWSPALTGFSTGPALPATSTSLAQMSPALTSAMPQTTHSPVTSPSTLSHVEALTSGAVVVHTTPKKPHLPTNPEILVPHISTEGAITTEGNREHTDPTTQPIPLTTSTTSAGERTTELGRAEESSPSHFLTPSSPQTTDVSTAEMLTSRYITFAAQSTSQSPTALPPLTPVNSCTVNPCLHDGKCIVDLTGRGYRCVCPPAWQGENCSVDVNECLSSPCPPLATCNNTQGSFTCRCPVGYQLEKGICNLVRTFVTEFKLKKTFLNTTAENHSNTQELENEIAQTLNVCFSTLPGYIRTTAHVSREPSTVFISLKTTFALASNVTLFDLADRIQKYVNSCRSSAEVCQLLGSQRRVFRAGSLCKRKSPECDKETSICTDLDGVALCQCKSGYFQFNKMDHSCRACEDGYRLENETCMSCPFGLGGLNCGNPYQLITVVIAAAGGGLLLILGVALIVTCCRKSKNDISKLIFKSGDFQMSPYTDVPKNPRSQEWGREAIEMHENGSTKNLLQMTDVYYSPTNVRNPELERNGLYPAYTGLPGSRHSCIFPGQYNPSFISDESRRRDYF.

Residues 1–31 (MATPRAPRWPPPSLLLLLLLPLLLLPPAAPG) form the signal peptide. 2 stretches are compositionally biased toward low complexity: residues 28–40 (AAPG…PSPA) and 54–66 (PGAG…PGVA). 6 disordered regions span residues 28 to 149 (AAPG…SNMA), 175 to 211 (SSLL…GFLE), 235 to 296 (ASHP…QNPS), 313 to 675 (VPRT…PSPI), 723 to 767 (LIPS…TVSL), and 860 to 909 (EGNR…PQTT). Topologically, residues 32-1204 (ARGSLPSPAH…GLNCGNPYQL (1173 aa)) are extracellular. Residues 118 to 131 (TAQNARMSHSSSEG) are compositionally biased toward polar residues. Over residues 175-190 (SSLLSLESLPESPSSS) the composition is skewed to low complexity. Polar residues-rich tracts occupy residues 195–206 (RITPSQTESGTS), 247–258 (VLSQKRNSSGQE), 283–296 (IKNG…QNPS), and 340–361 (GITS…NSGL). Residues 470–480 (RGGGEDSGMGG) show a composition bias toward gly residues. 2 stretches are compositionally biased toward low complexity: residues 486–502 (SSSS…LDSS) and 556–575 (SYSE…DSPS). Polar residues-rich tracts occupy residues 576 to 585 (QAQPKQSSMS) and 592 to 617 (AQSS…NMPN). Positions 637 to 675 (PSTQPSPSQPQPFSSALPSTRSPGSTSETTTSSPSPSPI) are enriched in low complexity. Composition is skewed to polar residues over residues 725–742 (PSNQ…QQEK) and 751–763 (SLVS…TKAV). A compositionally biased stretch (low complexity) spans 868–884 (PTTQPIPLTTSTTSAGE). Residues 885 to 896 (RTTELGRAEESS) are compositionally biased toward basic and acidic residues. A compositionally biased stretch (polar residues) spans 897-909 (PSHFLTPSSPQTT). The EGF-like 1 domain occupies 941 to 979 (PVNSCTVNPCLHDGKCIVDLTGRGYRCVCPPAWQGENCS). Cystine bridges form between Cys-945–Cys-956, Cys-950–Cys-967, Cys-969–Cys-978, Cys-985–Cys-996, Cys-990–Cys-1005, and Cys-1007–Cys-1018. An EGF-like 2; calcium-binding domain is found at 981–1019 (DVNECLSSPCPPLATCNNTQGSFTCRCPVGYQLEKGICN). The N-linked (GlcNAc...) asparagine glycan is linked to Asn-1093. A helical membrane pass occupies residues 1205–1225 (ITVVIAAAGGGLLLILGVALI). The Cytoplasmic portion of the chain corresponds to 1226 to 1337 (VTCCRKSKND…SDESRRRDYF (112 aa)). Ser-1315 is modified (phosphoserine).

In terms of assembly, interacts with CCM2 and KRIT1; KRIT1 markedly facilitates interaction with CCM2.

The protein localises to the cell membrane. It localises to the cell junction. Its function is as follows. Receptor component of the CCM signaling pathway which is a crucial regulator of heart and vessel formation and integrity. May be acting by stabilizing endothelial cell junctions. This chain is Protein HEG homolog 1 (Heg1), found in Mus musculus (Mouse).